The chain runs to 355 residues: Uroporphyrinogen decarboxylase (355 aa).

Substrate is bound by residues 27–31 (RQAGR), phenylalanine 46, aspartate 77, tyrosine 154, serine 209, and histidine 327.

Belongs to the uroporphyrinogen decarboxylase family. In terms of assembly, homodimer.

Its subcellular location is the cytoplasm. The enzyme catalyses uroporphyrinogen III + 4 H(+) = coproporphyrinogen III + 4 CO2. Its pathway is porphyrin-containing compound metabolism; protoporphyrin-IX biosynthesis; coproporphyrinogen-III from 5-aminolevulinate: step 4/4. Functionally, catalyzes the decarboxylation of four acetate groups of uroporphyrinogen-III to yield coproporphyrinogen-III. This chain is Uroporphyrinogen decarboxylase, found in Nitrosomonas europaea (strain ATCC 19718 / CIP 103999 / KCTC 2705 / NBRC 14298).